The sequence spans 673 residues: ATP-dependent zinc metalloprotease FtsH (673 aa).

At 1 to 7 (MNGFFKN) the chain is on the cytoplasmic side. Residues 8-28 (LSLWLVIGLLMVMLFNLFNSP) form a helical membrane-spanning segment. The Periplasmic portion of the chain corresponds to 29–100 (QGPGQSITFS…DVREPEGTPM (72 aa)). The chain crosses the membrane as a helical span at residues 101–121 (LMQILISWFPMLLLIAVWIYF). Over 122-673 (MRQMQSGGGR…DTPEGDDKDR (552 aa)) the chain is Cytoplasmic. 194–201 (GPPGTGKT) provides a ligand contact to ATP. His-416 serves as a coordination point for Zn(2+). Glu-417 is a catalytic residue. The Zn(2+) site is built by His-420 and Asp-492. The segment at 601 to 673 (ALKPLKKKDE…DTPEGDDKDR (73 aa)) is disordered. Positions 648–660 (STRTATEASTQEV) are enriched in polar residues. Positions 661–673 (VSKDTPEGDDKDR) are enriched in basic and acidic residues.

It in the central section; belongs to the AAA ATPase family. This sequence in the C-terminal section; belongs to the peptidase M41 family. As to quaternary structure, homohexamer. Zn(2+) is required as a cofactor.

The protein resides in the cell inner membrane. In terms of biological role, acts as a processive, ATP-dependent zinc metallopeptidase for both cytoplasmic and membrane proteins. Plays a role in the quality control of integral membrane proteins. The chain is ATP-dependent zinc metalloprotease FtsH from Magnetococcus marinus (strain ATCC BAA-1437 / JCM 17883 / MC-1).